A 269-amino-acid polypeptide reads, in one-letter code: Shikimate dehydrogenase (NADP(+)) (269 aa).

Residues 14–16 (SLS) and Thr-61 each bind shikimate. The active-site Proton acceptor is the Lys-65. Position 76 (Glu-76) interacts with NADP(+). Asn-85 and Asp-99 together coordinate shikimate. NADP(+) contacts are provided by residues 123 to 127 (GAGGA), 146 to 151 (NRTPER), and Ile-209. Tyr-211 is a binding site for shikimate. Gly-231 contacts NADP(+).

Belongs to the shikimate dehydrogenase family. In terms of assembly, homodimer.

The catalysed reaction is shikimate + NADP(+) = 3-dehydroshikimate + NADPH + H(+). It participates in metabolic intermediate biosynthesis; chorismate biosynthesis; chorismate from D-erythrose 4-phosphate and phosphoenolpyruvate: step 4/7. Its function is as follows. Involved in the biosynthesis of the chorismate, which leads to the biosynthesis of aromatic amino acids. Catalyzes the reversible NADPH linked reduction of 3-dehydroshikimate (DHSA) to yield shikimate (SA). This Methanothrix thermoacetophila (strain DSM 6194 / JCM 14653 / NBRC 101360 / PT) (Methanosaeta thermophila) protein is Shikimate dehydrogenase (NADP(+)).